We begin with the raw amino-acid sequence, 375 residues long: Alanine racemase (375 aa).

Catalysis depends on Lys-35, which acts as the Proton acceptor; specific for D-alanine. Position 35 is an N6-(pyridoxal phosphate)lysine (Lys-35). Arg-130 is a substrate binding site. The Proton acceptor; specific for L-alanine role is filled by Tyr-253. Substrate is bound at residue Met-305.

This sequence belongs to the alanine racemase family. It depends on pyridoxal 5'-phosphate as a cofactor.

It carries out the reaction L-alanine = D-alanine. Its pathway is amino-acid biosynthesis; D-alanine biosynthesis; D-alanine from L-alanine: step 1/1. Its function is as follows. Catalyzes the interconversion of L-alanine and D-alanine. May also act on other amino acids. The sequence is that of Alanine racemase (alr) from Ralstonia nicotianae (strain ATCC BAA-1114 / GMI1000) (Ralstonia solanacearum).